An 80-amino-acid polypeptide reads, in one-letter code: Ataxin-8 (80 aa).

Specifically found in brains from SCA8 patients (at protein level).

Its subcellular location is the nucleus. This chain is Ataxin-8 (ATXN8), found in Homo sapiens (Human).